The primary structure comprises 106 residues: YcgL domain-containing protein PsycPRwf_1721 (106 aa).

The 94-residue stretch at methionine 1–glutamine 94 folds into the YcgL domain.

This is YcgL domain-containing protein PsycPRwf_1721 from Psychrobacter sp. (strain PRwf-1).